The chain runs to 289 residues: Acetylglutamate kinase (289 aa).

Substrate-binding positions include 65-66 (GG), Arg87, and Asn187.

Belongs to the acetylglutamate kinase family. ArgB subfamily.

It is found in the cytoplasm. The enzyme catalyses N-acetyl-L-glutamate + ATP = N-acetyl-L-glutamyl 5-phosphate + ADP. The protein operates within amino-acid biosynthesis; L-arginine biosynthesis; N(2)-acetyl-L-ornithine from L-glutamate: step 2/4. Catalyzes the ATP-dependent phosphorylation of N-acetyl-L-glutamate. In Chromobacterium violaceum (strain ATCC 12472 / DSM 30191 / JCM 1249 / CCUG 213 / NBRC 12614 / NCIMB 9131 / NCTC 9757 / MK), this protein is Acetylglutamate kinase.